We begin with the raw amino-acid sequence, 414 residues long: 11-beta-hydroxysteroid dehydrogenase type 2 (414 aa).

4 consecutive transmembrane segments (helical) span residues 3–23, 26–46, 52–72, and 341–361; these read DFAV…GGAV, FLAF…ATLL, ALCM…WLYF, and YYAG…PLSI. The tract at residues 382-414 is disordered; sequence KQQGLSPNDNNNSIKENMNDSSSNNSNFTKCID. Polar residues predominate over residues 384–397; that stretch reads QGLSPNDNNNSIKE.

The protein belongs to the short-chain dehydrogenases/reductases (SDR) family. In terms of tissue distribution, broadly expressed in peripheral (brain, gill, eye, heart, liver, head kidney, posterior kidney, and gut).

It is found in the membrane. The enzyme catalyses an 11beta-hydroxysteroid + NAD(+) = an 11-oxosteroid + NADH + H(+). It carries out the reaction cortisol + NAD(+) = cortisone + NADH + H(+). The catalysed reaction is corticosterone + NAD(+) = 11-dehydrocorticosterone + NADH + H(+). It catalyses the reaction 11beta,17beta-dihydroxyandrost-4-ene-3-one + NAD(+) = 17beta-hydroxyandrost-4-ene-3,11-dione + NADH + H(+). The enzyme catalyses 11beta-hydroxyandrost-4-ene-3,17-dione + NAD(+) = androst-4-ene-3,11,17-trione + NADH + H(+). It participates in steroid metabolism. Its function is as follows. Catalyzes the conversion of biologically active 11beta-hydroxyglucocorticoids (11beta-hydroxysteroid) such as cortisol, to inactive 11-ketoglucocorticoids (11-oxosteroid) such as cortisone, in the presence of NAD(+). Cortisol is the primary glucocorticoid in teleosts and is released to increase glucose bioavailability in order to meet the increased energy demands in response to stress. Functions as a dehydrogenase (oxidase), thereby decreasing the concentration of active glucocorticoids, regulating the hypothalamus-pituitary-interrenal (HPI) axis function in adult fish. Decreasing the excess glucocorticoids may be of relevance to brain function and neural proliferation. Plays a key role by catalyzing the oxidation of 11beta-hydroxytestosterone (11beta,17beta-dihydroxyandrost-4-ene-3-one) to 11-ketotestosterone (17beta-hydroxyandrost-4-ene-3,11-dione), the major fish androgen, that activates androgen receptor transcriptional activity. Catalyzes the conversion of 11beta-hydroxyandrostenedione (11beta-hydroxyandrost-4-ene-3,17-dione) to 11-ketoandrostenedione (androst-4-ene-3,11,17-trione), which can be further metabolized to 11-ketotestosterone. Exerts a dual role in fish by inactivating glucocorticoids and activating androgens. This Danio rerio (Zebrafish) protein is 11-beta-hydroxysteroid dehydrogenase type 2 (hsd11b2).